We begin with the raw amino-acid sequence, 332 residues long: Beta-ketoacyl-[acyl-carrier-protein] synthase III (332 aa).

Active-site residues include Cys-114 and His-255. Residues 256–260 (QANLR) form an ACP-binding region. Residue Asn-285 is part of the active site.

The protein belongs to the thiolase-like superfamily. FabH family. In terms of assembly, homodimer.

It localises to the cytoplasm. The enzyme catalyses malonyl-[ACP] + acetyl-CoA + H(+) = 3-oxobutanoyl-[ACP] + CO2 + CoA. It participates in lipid metabolism; fatty acid biosynthesis. Functionally, catalyzes the condensation reaction of fatty acid synthesis by the addition to an acyl acceptor of two carbons from malonyl-ACP. Catalyzes the first condensation reaction which initiates fatty acid synthesis and may therefore play a role in governing the total rate of fatty acid production. Possesses both acetoacetyl-ACP synthase and acetyl transacylase activities. Its substrate specificity determines the biosynthesis of branched-chain and/or straight-chain of fatty acids. In Sulfurimonas denitrificans (strain ATCC 33889 / DSM 1251) (Thiomicrospira denitrificans (strain ATCC 33889 / DSM 1251)), this protein is Beta-ketoacyl-[acyl-carrier-protein] synthase III.